We begin with the raw amino-acid sequence, 549 residues long: Exodeoxyribonuclease 7 large subunit (549 aa).

Positions 511–549 are disordered; it reads LVATDPPVDPKPTRKPVQKSSSPKPSSRKPKKSQQEDLF.

This sequence belongs to the XseA family. In terms of assembly, heterooligomer composed of large and small subunits.

The protein resides in the cytoplasm. It carries out the reaction Exonucleolytic cleavage in either 5'- to 3'- or 3'- to 5'-direction to yield nucleoside 5'-phosphates.. Bidirectionally degrades single-stranded DNA into large acid-insoluble oligonucleotides, which are then degraded further into small acid-soluble oligonucleotides. This is Exodeoxyribonuclease 7 large subunit from Beijerinckia indica subsp. indica (strain ATCC 9039 / DSM 1715 / NCIMB 8712).